The sequence spans 219 residues: RING finger protein nenya (219 aa).

The RING-type zinc-finger motif lies at 6 to 48 (CNKCFRRRNVEPTLIFHMTQCQHVLCASCLSESSTDKKCPLCK). Residues 161–181 (NQARGLRPRTPSVTTSDNTQS) form a disordered region.

As to quaternary structure, may interact with itself, with narya and vilya through its RING-type zinc finger.

Its function is as follows. Required for the formation of DNA double-strand breaks together with narya and vilya during the meiotic recombination process. Plays a redundant role with narya in chromosome segregation during female meiosis. The protein is RING finger protein nenya of Drosophila melanogaster (Fruit fly).